Consider the following 503-residue polypeptide: REST corepressor 2 (503 aa).

The tract at residues 1–62 (MPSVMEKSHG…IPECKPDNTS (62 aa)) is disordered. The 86-residue stretch at 41–126 (SMIRVGSDYQ…RSLADLANFT (86 aa)) folds into the ELM2 domain. Residues 127 to 178 (PFPEEWSVEDKVLFEQAFSFHGKSFQRIQQMLPEKLIPSLVKYYYSWKKTRS) form the SANT 1 domain. Coiled coils occupy residues 182-206 (VMDR…DQIK) and 286-314 (QLET…SLEG). The 52-residue stretch at 327-378 (KLNARWTTDEQLLAVQAVRKYGKDFQAISEVLGNKTPSQVKTFFISYRRRFN) folds into the SANT 2 domain. Residues 385–503 (EWEAEQEPSP…VGSHAESTFS (119 aa)) are disordered. The span at 399 to 412 (TDMSNKTSGSSQTP) shows a compositional bias: polar residues. The span at 423 to 442 (SVSSSSQPAPPAAAAAASLS) shows a compositional bias: low complexity.

It belongs to the CoREST family.

The protein localises to the nucleus. Its function is as follows. May act as a component of a corepressor complex that represses transcription. The chain is REST corepressor 2 (rcor2) from Xenopus laevis (African clawed frog).